A 468-amino-acid polypeptide reads, in one-letter code: Peripherin (468 aa).

Low complexity predominate over residues M1–S16. The interval M1 to G22 is disordered. Positions M1–Q96 are head. 3'-nitrotyrosine is present on Y17. 3 positions are modified to phosphoserine: S28, S50, and S59. The IF rod domain maps to E94–I404. Residues E97 to A129 form a coil 1A region. A linker 1 region spans residues R130–L140. A coil 1B region spans residues C141–L236. Positions Q237 to T259 are linker 2. The coil 2 stretch occupies residues A260–S402. Y376 carries the post-translational modification 3'-nitrotyrosine. The segment at R403–Y468 is tail. Residues G445–Y468 are disordered. A Phosphotyrosine modification is found at Y468.

It belongs to the intermediate filament family. In terms of assembly, forms homodimers (in vitro). Homopolymerizes into a filamentous network (in vitro). Forms heterodimers with NEFL, NEFM or NEFH (in vitro). Interacts with DST (via C-terminus). Interacts with RAB7A; the interaction is direct. Interacts with PRKCE (via phorbol-ester/DAG-type 2 domain). Phosphorylated; phosphorylation increases after nerve injury in regenerating neurons. In terms of tissue distribution, expressed in hypoglossal motor neurons (at protein level). Expressed in the small and large sensory neurons of the dorsal root ganglion (at protein level). Expressed in cutaneous and muscular sensory neurons.

It is found in the cytoplasm. The protein resides in the cytoskeleton. Its subcellular location is the cell projection. The protein localises to the axon. It localises to the perikaryon. Class-III neuronal intermediate filament protein. My form an independent structural network without the involvement of other neurofilaments or may cooperate with the neuronal intermediate filament proteins NEFL, NEFH, NEFM and INA to form a filamentous network. Assembly of the neuronal intermediate filaments may be regulated by RAB7A. Plays a role in the development of unmyelinated sensory neurons. May be involved in axon elongation and axon regeneration after injury. Inhibits neurite extension in type II spiral ganglion neurons in the cochlea. This chain is Peripherin (Prph), found in Rattus norvegicus (Rat).